The primary structure comprises 364 residues: Anthranilate phosphoribosyltransferase (364 aa).

5-phospho-alpha-D-ribose 1-diphosphate contacts are provided by residues Gly-101, 104–105, Thr-109, 111–114, 129–137, and Gly-141; these read GD, NLST, and KHGNRAASS. Gly-101 contributes to the anthranilate binding site. Ser-113 serves as a coordination point for Mg(2+). Asn-132 is an anthranilate binding site. Residue Arg-187 coordinates anthranilate. 2 residues coordinate Mg(2+): Asp-245 and Glu-246.

The protein belongs to the anthranilate phosphoribosyltransferase family. As to quaternary structure, homodimer. It depends on Mg(2+) as a cofactor.

The enzyme catalyses N-(5-phospho-beta-D-ribosyl)anthranilate + diphosphate = 5-phospho-alpha-D-ribose 1-diphosphate + anthranilate. Its pathway is amino-acid biosynthesis; L-tryptophan biosynthesis; L-tryptophan from chorismate: step 2/5. Functionally, catalyzes the transfer of the phosphoribosyl group of 5-phosphorylribose-1-pyrophosphate (PRPP) to anthranilate to yield N-(5'-phosphoribosyl)-anthranilate (PRA). The sequence is that of Anthranilate phosphoribosyltransferase from Mycolicibacterium vanbaalenii (strain DSM 7251 / JCM 13017 / BCRC 16820 / KCTC 9966 / NRRL B-24157 / PYR-1) (Mycobacterium vanbaalenii).